Reading from the N-terminus, the 351-residue chain is Homeobox protein rough sheath 1 (351 aa).

Disordered stretches follow at residues 1-23, 57-82, and 187-229; these read MDQS…NSKA, AAAP…GAEM, and GGGS…PRAE. Residues 57-68 show a composition bias toward low complexity; sequence AAAPSSSQQHQQ. Residues 214–229 show a composition bias toward basic and acidic residues; that stretch reads PNGRENDPPEIDPRAE. In terms of domain architecture, ELK spans 232-252; the sequence is ELKYQLLKKYSGYLSSLRQEF. The segment at residues 253–316 is a DNA-binding region (homeobox; TALE-type); that stretch reads SKKKKKGKLP…NQRKRHWKPS (64 aa).

It belongs to the TALE/KNOX homeobox family.

The protein resides in the nucleus. Its function is as follows. Plays a possible role in patterning the placement of lateral organs along the axis of the shoot. Mutations in RS1 alters cell fate and causes unregulated cell division and expansion in the leaf. Probably binds to the DNA sequence 5'-TGAC-3'. The chain is Homeobox protein rough sheath 1 (RS1) from Zea mays (Maize).